Consider the following 543-residue polypeptide: EH domain-containing protein 2 (543 aa).

Phosphoserine occurs at positions 3 and 44. The region spanning 55-286 is the Dynamin-type G domain; the sequence is FDGKPMVLVA…DLFRDIQGLP (232 aa). The segment at 65 to 72 is G1 motif; that stretch reads GQYSTGKT. 65–72 contributes to the ATP binding site; that stretch reads GQYSTGKT. The G2 motif stretch occupies residues 91 to 92; sequence EP. The segment at 153-156 is G3 motif; sequence DTPG. The tract at residues 219–222 is G4 motif; sequence NKAD. K220 is an ATP binding site. A region of interest (G5 motif) is located at residue V243. ATP is bound at residue W258. A mediates membrane-binding region spans residues 320 to 340; it reads SVFGKENKKKQLIFKLPVIFA. Phosphoserine is present on residues S438, S468, S470, S484, and S493. The EH domain maps to 449–537; that stretch reads DKSKYDEIFY…RRLVPPSKRR (89 aa). The EF-hand domain maps to 481 to 516; sequence LPNSVLGRIWKLSDVDRDGMLDDEEFALASHLIEAK. Residues D494, D496, D498, M500, and E505 each coordinate Ca(2+). The tract at residues 521-543 is disordered; sequence GLPTNLPRRLVPPSKRRQKGSAE. The span at 534–543 shows a compositional bias: basic residues; that stretch reads SKRRQKGSAE.

The protein belongs to the TRAFAC class dynamin-like GTPase superfamily. Dynamin/Fzo/YdjA family. EHD subfamily. In terms of assembly, homodimer and homooligomer. Interacts with EHD1. May also interact with EHD3 and EHD4. Interacts with MYOF. Interacts with EHBP1. Interacts with FER1L5 (via second C2 domain). Interacts with CAV1 in a cholesterol-dependent manner. Interacts (via EH domain) with PACSIN2 (via NPF motifs); this interaction probably stabilizes the caveolae.

The protein localises to the cell membrane. Its subcellular location is the membrane. The protein resides in the caveola. It is found in the endosome membrane. It localises to the cytoplasm. The protein localises to the cytosol. With respect to regulation, the very low intrinsic ATPase activity is increased upon interaction with liposomes. Functionally, ATP- and membrane-binding protein that controls membrane reorganization/tubulation upon ATP hydrolysis. Plays a role in membrane trafficking between the plasma membrane and endosomes. Important for the internalization of GLUT4. Required for fusion of myoblasts to skeletal muscle myotubes. Required for normal translocation of FER1L5 to the plasma membrane. Regulates the equilibrium between cell surface-associated and cell surface-dissociated caveolae by constraining caveolae at the cell membrane. In Rattus norvegicus (Rat), this protein is EH domain-containing protein 2.